The sequence spans 500 residues: Lysine--tRNA ligase (500 aa).

Glu410 and Glu417 together coordinate Mg(2+).

Belongs to the class-II aminoacyl-tRNA synthetase family. In terms of assembly, homodimer. Mg(2+) is required as a cofactor.

The protein localises to the cytoplasm. The catalysed reaction is tRNA(Lys) + L-lysine + ATP = L-lysyl-tRNA(Lys) + AMP + diphosphate. This Shewanella frigidimarina (strain NCIMB 400) protein is Lysine--tRNA ligase.